The following is a 434-amino-acid chain: MAGSISSMYSPSAGLISLCQSQVRLLQQGLRVDWCGVYLNQEETEQGLVPLVVSHGSTLVESESYGLISLPQGEVSPPMDDFSLPAVPVGVGQLSRRSRLEPPPFDADKRLVLPLVYGEEMVGLLVIHRSQGQWHGEEMMQLEAIAKSLAVACLLDQQQDWYRQAWEEQNQQYQWERQHWADLLHQLRNPLTALKTFSKLLLKRWHGDNKSQQVVEGIVRQGEHLQELLQSFEASQSQGPEAVPLLSSSPVTTIQVLPPADRVETMPLANFSLGEVLPPILLAHQAIAAERNITLTAQIALIDTVVMANRLALREVVNNLLDNGIKYTPNGGLVEVSLALEKVSSSGMDWATLAIADTGYGIPPEDQQKIFERNYRGVQGRGSINGTGLGLAIVADLVAQMGGKITVTSPNGLSRDPDQPGSTFTLWLRSGEQV.

One can recognise a GAF domain in the interval 16 to 152; that stretch reads ISLCQSQVRL…EAIAKSLAVA (137 aa). Position 19 (C19) interacts with [3Fe-4S] cluster. The 251-residue stretch at 182 to 432 folds into the Histidine kinase domain; the sequence is DLLHQLRNPL…TFTLWLRSGE (251 aa). H185 is subject to Phosphohistidine; by autocatalysis. The G1 box signature appears at 357–361; that stretch reads DTGYG. Residues 386-390 carry the G2 box motif; that stretch reads GTGLG.

Belongs to the chloroplast sensor kinase protein family. Exists as monomers, tetramers, hexamers and other higher-order oligomers; all are able to autophosphorylate. Upon treatment with 0.5 M NaCl only tetramers are seen, which are probably inactive. Interacts with both RppA and Rre1. Requires [3Fe-4S] cluster as cofactor. Post-translationally, autophosphorylates, probably on His-185.

Its subcellular location is the cytoplasm. It catalyses the reaction ATP + protein L-histidine = ADP + protein N-phospho-L-histidine.. With respect to regulation, autophosphorylation is inhibited by Na(+) but not by Cl(-). Reducing agents dithionite, duroquinol and decyl-plastoquinone, but not NADPH or ferredoxin inhibit autophosphorylation. Oxidation of the Fe-S cluster (with potassium ferricyanide) induces a conformational change that is conducive to its autophosphorylation activity. Member of possibly 2 two-component regulatory system(s) Hik2/Rre1 and Hik2/RppA. Transduces PQ (plastoquinone) redox signals to photosystem gene expression machinery during the adjustment of photosystem stoichiometry. Reduced PQ suppresses its autophosphorylation activity (i.e. kinase activity is higher under oxidizing conditions). Member of two-component regulatory system Hik2/Rre1, controls expression of sigB (sll0306), sll0528, slr1119, slr0852 and ssr3188 in response to hyperosmotic stress. Activity responds to high salt (with a linear response as concentrations rise to 0.5 M NaCl); detects Cl(-) levels. Autophosphorylates and transfers phosphate to Rre1. May transfer phosphate to RppA in a possible Hik2/RppA two-component system. The chain is Sensor histidine kinase Hik2 from Synechocystis sp. (strain ATCC 27184 / PCC 6803 / Kazusa).